The sequence spans 650 residues: Putative polypeptide N-acetylgalactosaminyltransferase 9 (650 aa).

At 1 to 11 (MAFIWRRRSTT) the chain is on the cytoplasmic side. Residues 12–31 (IVKLVAFALAIWFCIAFLVY) traverse the membrane as a helical; Signal-anchor for type II membrane protein segment. Over 32–650 (TDDTRRRAAQ…TLENYDSSKL (619 aa)) the chain is Lumenal. The tract at residues 84 to 154 (NVIGGGGQKQ…NPGELGKPVR (71 aa)) is disordered. Basic and acidic residues predominate over residues 107 to 136 (HKADLQAERMRKKAAEQPKKKPQEDSKKVI). Cystine bridges form between C198/C432, C423/C499, C535/C554, C577/C590, and C616/C631. Residues 208–317 (LPKTDVIICF…EGWLEPLLDR (110 aa)) are catalytic subdomain A. The substrate site is built by C216, D249, and R278. D301 contributes to the Mn(2+) binding site. Residues S302 and H303 each contribute to the substrate site. H303 serves as a coordination point for Mn(2+). N-linked (GlcNAc...) asparagine glycosylation is found at N321 and N373. Residues 378-440 (PVYSPTMAGG…PCSHVGHIFR (63 aa)) form a catalytic subdomain B region. Residue H437 coordinates Mn(2+). Substrate is bound by residues R440 and Y445. Positions 521–643 (AHGEIRNLGY…SLSRQQWTLE (123 aa)) constitute a Ricin B-type lectin domain.

Belongs to the glycosyltransferase 2 family. GalNAc-T subfamily. Isoform A forms homotetramer. Isoform B forms homodimer. It depends on Mn(2+) as a cofactor.

The protein resides in the golgi apparatus membrane. The enzyme catalyses L-seryl-[protein] + UDP-N-acetyl-alpha-D-galactosamine = a 3-O-[N-acetyl-alpha-D-galactosaminyl]-L-seryl-[protein] + UDP + H(+). It carries out the reaction L-threonyl-[protein] + UDP-N-acetyl-alpha-D-galactosamine = a 3-O-[N-acetyl-alpha-D-galactosaminyl]-L-threonyl-[protein] + UDP + H(+). It functions in the pathway protein modification; protein glycosylation. Catalyzes the initial reaction in O-linked oligosaccharide biosynthesis, the transfer of an N-acetyl-D-galactosamine residue to a serine or threonine residue on the protein receptor. It can both act as a peptide transferase that transfers GalNAc onto unmodified peptide substrates, and as a glycopeptide transferase that requires the prior addition of a GalNAc on a peptide before adding additional GalNAc moieties. In terms of biological role, N-acetylgalactosaminyltransferase which preferentially O-glycosylates negatively charge substrates. O-glycosylates mucin-like protein Sgs3 in the salivary gland but to a lesser extent than isoform B. By regulating the O-glycosylation of secretory cargo proteins plays a role in the morphology and maturation of salivary gland secretory granules. Functionally, N-acetylgalactosaminyltransferase which preferentially O-glycosylates positively charge substrates. O-glycosylates mucin-like protein Sgs3 in the salivary gland. By regulating the O-glycosylation of secretory cargo proteins, plays a role in the morphology and maturation of salivary gland secretory granules. The sequence is that of Putative polypeptide N-acetylgalactosaminyltransferase 9 from Drosophila melanogaster (Fruit fly).